The following is a 299-amino-acid chain: Methionyl-tRNA formyltransferase (299 aa).

(6S)-5,6,7,8-tetrahydrofolate is bound at residue 109–112 (SLLP).

This sequence belongs to the Fmt family.

The catalysed reaction is L-methionyl-tRNA(fMet) + (6R)-10-formyltetrahydrofolate = N-formyl-L-methionyl-tRNA(fMet) + (6S)-5,6,7,8-tetrahydrofolate + H(+). Its function is as follows. Attaches a formyl group to the free amino group of methionyl-tRNA(fMet). The formyl group appears to play a dual role in the initiator identity of N-formylmethionyl-tRNA by promoting its recognition by IF2 and preventing the misappropriation of this tRNA by the elongation apparatus. The chain is Methionyl-tRNA formyltransferase from Wolbachia sp. subsp. Drosophila simulans (strain wRi).